Reading from the N-terminus, the 115-residue chain is Large ribosomal subunit protein bL19 (115 aa).

It belongs to the bacterial ribosomal protein bL19 family.

This protein is located at the 30S-50S ribosomal subunit interface and may play a role in the structure and function of the aminoacyl-tRNA binding site. The protein is Large ribosomal subunit protein bL19 of Shouchella clausii (strain KSM-K16) (Alkalihalobacillus clausii).